Here is a 562-residue protein sequence, read N- to C-terminus: Serine palmitoyltransferase 2 (562 aa).

Residues 67 to 87 traverse the membrane as a helical segment; the sequence is PMLVAVLTYVGYGVLTLFGYL. Residue lysine 379 is modified to N6-(pyridoxal phosphate)lysine.

Belongs to the class-II pyridoxal-phosphate-dependent aminotransferase family. As to quaternary structure, component of the serine palmitoyltransferase (SPT) complex, which is composed of SPTLC1, SPTLC2 or SPTLC3 and SPTSSA or SPTSSB. The heterodimer consisting of SPTLC1 and SPTLC2/SPTLC3 forms the catalytic core of the enzyme, while SPTSSA or SPTSSB subunits determine substrate specificity. SPT also interacts with ORMDL proteins, especially ORMDL3, which negatively regulate SPT activity in the presence of ceramides. Forms dimers of heterodimers with SPTLC1. It depends on pyridoxal 5'-phosphate as a cofactor. Widely expressed.

The protein localises to the endoplasmic reticulum membrane. The enzyme catalyses L-serine + hexadecanoyl-CoA + H(+) = 3-oxosphinganine + CO2 + CoA. The catalysed reaction is octadecanoyl-CoA + L-serine + H(+) = 3-oxoeicosasphinganine + CO2 + CoA. The protein operates within lipid metabolism; sphingolipid metabolism. Its activity is regulated as follows. SPT complex catalytic activity is negatively regulated by ORMDL proteins, including ORMDL3, in the presence of ceramides. This mechanism allows to maintain ceramide levels at sufficient concentrations for the production of complex sphingolipids, but which prevents the accumulation of ceramides to levels that trigger apoptosis. In terms of biological role, component of the serine palmitoyltransferase multisubunit enzyme (SPT) that catalyzes the initial and rate-limiting step in sphingolipid biosynthesis by condensing L-serine and activated acyl-CoA (most commonly palmitoyl-CoA) to form long-chain bases. The SPT complex is composed of SPTLC1, SPTLC2 or SPTLC3 and SPTSSA or SPTSSB. Within this complex, the heterodimer consisting of SPTLC1 and SPTLC2/SPTLC3 forms the catalytic core. The composition of the serine palmitoyltransferase (SPT) complex determines the substrate preference. The SPTLC1-SPTLC2-SPTSSA complex shows a strong preference for C16-CoA substrate, while the SPTLC1-SPTLC3-SPTSSA isozyme uses both C14-CoA and C16-CoA as substrates, with a slight preference for C14-CoA. The SPTLC1-SPTLC2-SPTSSB complex shows a strong preference for C18-CoA substrate, while the SPTLC1-SPTLC3-SPTSSB isozyme displays an ability to use a broader range of acyl-CoAs, without apparent preference. Crucial for adipogenesis. This is Serine palmitoyltransferase 2 from Homo sapiens (Human).